Reading from the N-terminus, the 855-residue chain is DNA mismatch repair protein MutS (855 aa).

616 to 623 (GPNMGGKS) is a binding site for ATP.

The protein belongs to the DNA mismatch repair MutS family.

In terms of biological role, this protein is involved in the repair of mismatches in DNA. It is possible that it carries out the mismatch recognition step. This protein has a weak ATPase activity. This is DNA mismatch repair protein MutS from Salmonella dublin (strain CT_02021853).